We begin with the raw amino-acid sequence, 31 residues long: Sarcolipin (31 aa).

The Cytoplasmic portion of the chain corresponds to 1–7; it reads MERSTQE. Residues 8–26 form a helical membrane-spanning segment; it reads LFINFTVVLITVLLMWLLV. Over 27–31 the chain is Lumenal; the sequence is RSYQY.

The protein belongs to the sarcolipin family. As to quaternary structure, homooligomer. Can also form heterooligomers with other sarcoplasmic/endoplasmic reticulum calcium ATPase (SERCA) regulators ARLN, ERLN, PLN and STRIT1/DWORF. Monomer. Interacts with calcium ATPase ATP2A1/SERCA1. Interacts as a monomer with ATP2A2/SERCA2; the interaction decreases ATP2A2 Ca(2+) affinity. Interacts with VMP1; VMP1 competes with PLN and SLN to prevent them from forming an inhibitory complex with ATP2A2.

Its subcellular location is the sarcoplasmic reticulum membrane. The protein resides in the endoplasmic reticulum membrane. Functionally, reversibly inhibits the activity of ATP2A1/SERCA1 and ATP2A2/SERCA2 in sarcoplasmic reticulum by decreasing the apparent affinity of the ATPase for Ca(2+). Also inhibits the activity of ATP2A3/SERCA3. Modulates calcium re-uptake during muscle relaxation and plays an important role in calcium homeostasis in muscle. Required for muscle-based, non-shivering thermogenesis. This Rattus norvegicus (Rat) protein is Sarcolipin (Sln).